A 210-amino-acid chain; its full sequence is Glycerol-3-phosphate acyltransferase (210 aa).

The next 5 membrane-spanning stretches (helical) occupy residues 1–21 (MLLS…FPAG), 53–73 (GPAL…VVAA), 87–107 (IAWL…LPVW), 122–142 (VLLA…LLLL), and 147–167 (IVSL…LILP).

The protein belongs to the PlsY family. In terms of assembly, probably interacts with PlsX.

The protein localises to the cell inner membrane. The catalysed reaction is an acyl phosphate + sn-glycerol 3-phosphate = a 1-acyl-sn-glycero-3-phosphate + phosphate. It participates in lipid metabolism; phospholipid metabolism. In terms of biological role, catalyzes the transfer of an acyl group from acyl-phosphate (acyl-PO(4)) to glycerol-3-phosphate (G3P) to form lysophosphatidic acid (LPA). This enzyme utilizes acyl-phosphate as fatty acyl donor, but not acyl-CoA or acyl-ACP. This chain is Glycerol-3-phosphate acyltransferase, found in Synechococcus elongatus (strain ATCC 33912 / PCC 7942 / FACHB-805) (Anacystis nidulans R2).